We begin with the raw amino-acid sequence, 98 residues long: DNA-binding protein Fis (98 aa).

The segment at residues 74 to 93 is a DNA-binding region (H-T-H motif); the sequence is QTRAALMMGINRGTLRKKLK.

Belongs to the transcriptional regulatory Fis family. In terms of assembly, homodimer.

Activates ribosomal RNA transcription. Plays a direct role in upstream activation of rRNA promoters. The protein is DNA-binding protein Fis of Enterobacter sp. (strain 638).